The chain runs to 137 residues: Chaperone protein YscB (137 aa).

As to quaternary structure, interacts with SycN to form a complex which specifically binds to YopN.

It is found in the cytoplasm. It localises to the cell inner membrane. Functionally, functions as a specific chaperone for YopN. It could facilitate the secretion and the subsequent translocation of YopN. The protein is Chaperone protein YscB (yscB) of Yersinia enterocolitica.